Reading from the N-terminus, the 340-residue chain is Protein RecA (340 aa).

65 to 72 (GPESGGKT) provides a ligand contact to ATP.

It belongs to the RecA family.

It is found in the cytoplasm. Can catalyze the hydrolysis of ATP in the presence of single-stranded DNA, the ATP-dependent uptake of single-stranded DNA by duplex DNA, and the ATP-dependent hybridization of homologous single-stranded DNAs. It interacts with LexA causing its activation and leading to its autocatalytic cleavage. This Thermus thermophilus protein is Protein RecA.